We begin with the raw amino-acid sequence, 309 residues long: MEKVLVIVGPTAVGKTALSIALAKKFNGEIISGDSMQVYRSLDIGTAKVTETEKEGIPHYLIDCREVSETYSAADFQKEGRQKIKEITEKGKLPIIVGGTGLYIQSLLYDFQLGSREIDDSPEIRETYNLFAEEKGNQALWLLLQQKDPLAANSIHFNNRKKVIRALEVFDKTGYSILTPKEKPARLYDYYLLGLETDRALLYERINQRVDQMMTEGLLEEAKQMFQQPHAQAAQGIGYKEFFPYFSGEQSLEMAVETVKQQSRRYAKRQLTWFRNRMAAHWWNLVQQPTDLPKLEKEVAEWLQQKESE.

9–16 (GPTAVGKT) contacts ATP. A substrate-binding site is contributed by 11-16 (TAVGKT). The segment at 34–37 (DSMQ) is interaction with substrate tRNA.

Belongs to the IPP transferase family. As to quaternary structure, monomer. Mg(2+) is required as a cofactor.

The catalysed reaction is adenosine(37) in tRNA + dimethylallyl diphosphate = N(6)-dimethylallyladenosine(37) in tRNA + diphosphate. Its function is as follows. Catalyzes the transfer of a dimethylallyl group onto the adenine at position 37 in tRNAs that read codons beginning with uridine, leading to the formation of N6-(dimethylallyl)adenosine (i(6)A). The chain is tRNA dimethylallyltransferase from Enterococcus faecalis (strain ATCC 700802 / V583).